Here is a 420-residue protein sequence, read N- to C-terminus: D-tagatose-1,6-bisphosphate aldolase subunit GatZ (420 aa).

The protein belongs to the GatZ/KbaZ family. GatZ subfamily. In terms of assembly, forms a complex with GatY.

The protein operates within carbohydrate metabolism; D-tagatose 6-phosphate degradation; D-glyceraldehyde 3-phosphate and glycerone phosphate from D-tagatose 6-phosphate: step 2/2. Component of the tagatose-1,6-bisphosphate aldolase GatYZ that is required for full activity and stability of the Y subunit. Could have a chaperone-like function for the proper and stable folding of GatY. When expressed alone, GatZ does not show any aldolase activity. Is involved in the catabolism of galactitol. The protein is D-tagatose-1,6-bisphosphate aldolase subunit GatZ of Escherichia coli O17:K52:H18 (strain UMN026 / ExPEC).